A 302-amino-acid chain; its full sequence is Beta-casein (302 aa).

The signal sequence occupies residues 1–15; the sequence is MKLLILTCLVALGFA. Phosphoserine occurs at positions 23 and 25. 16 repeat units span residues 144–151, 152–159, 160–167, 168–175, 176–182, 183–190, 191–198, 199–204, 205–214, 215–222, 223–230, 231–238, 241–247, 248–255, 256–262, and 263–269. The segment at 144–269 is 16 X approximate tandem repeats; it reads KREMLPIYER…LLPEEILPVN (126 aa).

The protein belongs to the beta-casein family. In terms of tissue distribution, mammary gland specific. Secreted in milk.

It localises to the secreted. In terms of biological role, important role in determination of the surface properties of the casein micelles. The protein is Beta-casein (CSN2) of Notamacropus eugenii (Tammar wallaby).